The sequence spans 734 residues: Photosystem I P700 chlorophyll a apoprotein A2 (734 aa).

8 consecutive transmembrane segments (helical) span residues 46 to 69 (IFAS…FHVA), 135 to 158 (LYTG…LHLQ), 175 to 199 (LNHH…HVAI), 273 to 291 (IAHH…GHMY), 330 to 353 (IHFQ…QHMY), 369 to 395 (AALY…IFFI), 417 to 439 (AIIS…LYVH), and 517 to 535 (FLVH…LILV). C559 and C568 together coordinate [4Fe-4S] cluster. 2 consecutive transmembrane segments (helical) span residues 575-596 (AFYL…YWHW) and 643-665 (LSVW…MFLI). 3 residues coordinate chlorophyll a: H654, M662, and Y670. Residue W671 coordinates phylloquinone. The helical transmembrane segment at 707–727 (LVGLAHFSVGYIFTYAAFLIA) threads the bilayer.

This sequence belongs to the PsaA/PsaB family. As to quaternary structure, the PsaA/B heterodimer binds the P700 chlorophyll special pair and subsequent electron acceptors. PSI consists of a core antenna complex that captures photons, and an electron transfer chain that converts photonic excitation into a charge separation. The eukaryotic PSI reaction center is composed of at least 11 subunits. P700 is a chlorophyll a/chlorophyll a' dimer, A0 is one or more chlorophyll a, A1 is one or both phylloquinones and FX is a shared 4Fe-4S iron-sulfur center. is required as a cofactor.

It is found in the plastid. Its subcellular location is the chloroplast thylakoid membrane. It carries out the reaction reduced [plastocyanin] + hnu + oxidized [2Fe-2S]-[ferredoxin] = oxidized [plastocyanin] + reduced [2Fe-2S]-[ferredoxin]. Its function is as follows. PsaA and PsaB bind P700, the primary electron donor of photosystem I (PSI), as well as the electron acceptors A0, A1 and FX. PSI is a plastocyanin-ferredoxin oxidoreductase, converting photonic excitation into a charge separation, which transfers an electron from the donor P700 chlorophyll pair to the spectroscopically characterized acceptors A0, A1, FX, FA and FB in turn. Oxidized P700 is reduced on the lumenal side of the thylakoid membrane by plastocyanin. This chain is Photosystem I P700 chlorophyll a apoprotein A2, found in Saccharum hybrid (Sugarcane).